Consider the following 247-residue polypeptide: ATP synthase subunit a, chloroplastic (247 aa).

Transmembrane regions (helical) follow at residues 38-58 (QVLI…ILVV), 95-115 (VPFI…GALL), 134-154 (INTT…AGIS), 199-219 (LVVV…VMFL), and 220-240 (GLFT…AYIG).

The protein belongs to the ATPase A chain family. As to quaternary structure, F-type ATPases have 2 components, CF(1) - the catalytic core - and CF(0) - the membrane proton channel. CF(1) has five subunits: alpha(3), beta(3), gamma(1), delta(1), epsilon(1). CF(0) has four main subunits: a, b, b' and c.

The protein resides in the plastid. The protein localises to the chloroplast thylakoid membrane. In terms of biological role, key component of the proton channel; it plays a direct role in the translocation of protons across the membrane. The sequence is that of ATP synthase subunit a, chloroplastic from Cicer arietinum (Chickpea).